Reading from the N-terminus, the 126-residue chain is MALSKAEILDAIAGMTVLELSELIKEMEEKFGVSAAAAAVAVAAPAAGGGAAAAEEQTEFTVVLAEAGANKVSVIKAVRELTGLGLKEAKDLVDGAPKPVKEGIAKADAEAAKKKLEEAGAKVEVK.

Belongs to the bacterial ribosomal protein bL12 family. Homodimer. Part of the ribosomal stalk of the 50S ribosomal subunit. Forms a multimeric L10(L12)X complex, where L10 forms an elongated spine to which 2 to 4 L12 dimers bind in a sequential fashion. Binds GTP-bound translation factors.

In terms of biological role, forms part of the ribosomal stalk which helps the ribosome interact with GTP-bound translation factors. Is thus essential for accurate translation. The chain is Large ribosomal subunit protein bL12 from Bordetella petrii (strain ATCC BAA-461 / DSM 12804 / CCUG 43448).